A 956-amino-acid chain; its full sequence is Thrombospondin-3 (956 aa).

The first 22 residues, 1-22, serve as a signal peptide directing secretion; that stretch reads METQELRGALALLLLCFFTSAS. The Laminin G-like domain maps to 23 to 193; sequence QDLQVIDLLT…VESMKIILGG (171 aa). Disulfide bonds link Cys-278/Cys-289, Cys-283/Cys-300, Cys-303/Cys-314, Cys-320/Cys-332, Cys-326/Cys-341, Cys-344/Cys-368, Cys-374/Cys-388, Cys-382/Cys-397, Cys-400/Cys-412, Cys-418/Cys-432, Cys-426/Cys-442, Cys-444/Cys-455, Cys-471/Cys-478, Cys-483/Cys-503, Cys-519/Cys-539, Cys-542/Cys-562, Cys-578/Cys-598, Cys-601/Cys-621, Cys-639/Cys-659, Cys-679/Cys-699, and Cys-715/Cys-936. Residue Asn-310 is glycosylated (N-linked (GlcNAc...) asparagine). Residues 316 to 354 form the EGF-like 1; calcium-binding domain; sequence DINECAHADPCFPGSSCINTMPGFHCEACPRGYKGTQVS. Residues 370 to 410 form the EGF-like 2; calcium-binding domain; sequence DIDECNDGNNGGCDPNSICTNTVGSFKCGPCRLGFLGNQSQ. Asn-407 is a glycosylation site (N-linked (GlcNAc...) asparagine). In terms of domain architecture, EGF-like 3 spans 414–456; the sequence is PARTCHSPAHSPCHIHAHCLFERNGAVSCQCNVGWAGNGNVCG. TSP type-3 repeat units lie at residues 457 to 491, 492 to 527, 528 to 550, 551 to 586, 587 to 609, 610 to 647, 648 to 687, and 688 to 723; these read TDTDIDGYPDQALPCMDNNKHCKQDNCLLTPNSGQ, EDADNDGVGDQCDDDADGDGIKNVEDNCRLFPNKDQ, QNSDTDSFGDACDNCPNVPNNDQ, KDTDGNGEGDACDNDVDGDGIPNGLDNCPKVPNPLQ, TDRDEDGVGDACDSCPEMSNPTQ, TDADSDLVGDVCDTNEDSDGDGHQDTKDNCPQLPNSSQ, LDSDNDGLGDECDGDDDNDGIPDYVPPGPDNCRLVPNPNQ, and KDSDGNGVGDVCEDDFDNDAVVDPLDVCPESAEVTL. Disordered regions lie at residues 518–537 and 546–702; these read NCRLFPNKDQQNSDTDSFGD and PNND…CEDD. Residues 555-568 show a composition bias toward acidic residues; the sequence is GNGEGDACDNDVDG. Residues 612–628 show a composition bias toward acidic residues; that stretch reads ADSDLVGDVCDTNEDSD. An N-linked (GlcNAc...) asparagine glycan is attached at Asn-644. A compositionally biased stretch (acidic residues) spans 650–667; sequence SDNDGLGDECDGDDDNDG. Residues 727–941 form the TSP C-terminal domain; it reads RAYQTVVLDP…LQYRCNDTVP (215 aa). Asn-937 is a glycosylation site (N-linked (GlcNAc...) asparagine).

Belongs to the thrombospondin family. In terms of assembly, oligomer; disulfide-linked.

Functionally, adhesive glycoprotein that mediates cell-to-cell and cell-to-matrix interactions. Can bind to fibrinogen, fibronectin, laminin and type V collagen. The polypeptide is Thrombospondin-3 (THBS3) (Homo sapiens (Human)).